The following is a 647-amino-acid chain: DNA mismatch repair protein MutL (647 aa).

A disordered region spans residues 393-423; that stretch reads VSLVANKQQPTVKQAKRSADDSDSEHGKLDY. Over residues 409–423 the composition is skewed to basic and acidic residues; it reads RSADDSDSEHGKLDY.

Belongs to the DNA mismatch repair MutL/HexB family.

This protein is involved in the repair of mismatches in DNA. It is required for dam-dependent methyl-directed DNA mismatch repair. May act as a 'molecular matchmaker', a protein that promotes the formation of a stable complex between two or more DNA-binding proteins in an ATP-dependent manner without itself being part of a final effector complex. In Streptococcus thermophilus (strain CNRZ 1066), this protein is DNA mismatch repair protein MutL.